The sequence spans 176 residues: uncharacterized protein (176 aa).

Residues 1–12 (MRLPYSSSKPIP) show a composition bias toward polar residues. 2 disordered regions span residues 1–88 (MRLP…PQQQ) and 109–132 (VNNSPIKTPSKKHRSSSKKSPSSS). The segment covering 13–24 (TNNNNNNNNTNN) has biased composition (low complexity). A compositionally biased stretch (polar residues) spans 37-46 (SYYQTQENNK). A compositionally biased stretch (low complexity) spans 47–88 (PQQSQQHPLLQHQQQQQQQQQQQQQQQQQQQQQQQQQQPQQQ).

This is an uncharacterized protein from Dictyostelium discoideum (Social amoeba).